The primary structure comprises 588 residues: D-3-phosphoglycerate dehydrogenase 3, chloroplastic (588 aa).

The transit peptide at 1–38 (MATSLNLSSIFSSSSRLVTTPSSVFPIRQRRRIILVTS) directs the protein to the chloroplast. NAD(+)-binding positions include 195–196 (KV), aspartate 215, 274–276 (VAR), and aspartate 300. Arginine 276 is a catalytic residue. The active site involves glutamate 305. Catalysis depends on histidine 324, which acts as the Proton donor. 324–327 (HLGA) serves as a coordination point for NAD(+). Residues 516 to 588 (VILCRQVDQP…AIEEFVFLKL (73 aa)) form the ACT domain.

The protein belongs to the D-isomer specific 2-hydroxyacid dehydrogenase family. In terms of tissue distribution, expressed in aerial parts. Not detected in roots and meristematic tissue. Expressed in cotyledons, adult leaves, stigma and anther filaments. Detected in the embryo.

Its subcellular location is the plastid. The protein resides in the chloroplast. It catalyses the reaction (2R)-3-phosphoglycerate + NAD(+) = 3-phosphooxypyruvate + NADH + H(+). The protein operates within amino-acid biosynthesis; L-serine biosynthesis; L-serine from 3-phospho-D-glycerate: step 1/3. Its activity is regulated as follows. Partially inhibited by 1 mM serine. In terms of biological role, involved in the plastidial phosphorylated pathway of serine biosynthesis (PPSB). This chain is D-3-phosphoglycerate dehydrogenase 3, chloroplastic (PGDH3), found in Arabidopsis thaliana (Mouse-ear cress).